The following is a 315-amino-acid chain: DNA-directed RNA polymerase subunit alpha (315 aa).

Positions 1–228 (MLEIEKPIIE…EHFKLFMSLT (228 aa)) are alpha N-terminal domain (alpha-NTD). The segment at 245–315 (KEKVLEMTVE…LGLALKLTEE (71 aa)) is alpha C-terminal domain (alpha-CTD).

It belongs to the RNA polymerase alpha chain family. Homodimer. The RNAP catalytic core consists of 2 alpha, 1 beta, 1 beta' and 1 omega subunit. When a sigma factor is associated with the core the holoenzyme is formed, which can initiate transcription.

The catalysed reaction is RNA(n) + a ribonucleoside 5'-triphosphate = RNA(n+1) + diphosphate. Functionally, DNA-dependent RNA polymerase catalyzes the transcription of DNA into RNA using the four ribonucleoside triphosphates as substrates. The chain is DNA-directed RNA polymerase subunit alpha from Clostridium beijerinckii (strain ATCC 51743 / NCIMB 8052) (Clostridium acetobutylicum).